We begin with the raw amino-acid sequence, 450 residues long: MKTWPAPTAPTPVRATVTVPGSKSQTNRALVLAALAAAQGRGASTISGALRSRDTELMLDALQTLGLRVDGVGSELTVSGRIEPGPGARVDCGLAGTVLRFVPPLAALGSVPVTFDGDQQARGRPIAPLLDALRELGVAVDGTGLPFRVRGNGSLAGGTVAIDASASSQFVSGLLLSAASFTDGLTVQHTGSSLPSAPHIAMTAAMLRQAGVDIDDSTPNRWQVRPGPVAARRWDIEPDLTNAVAFLSAAVVSGGTVRITGWPRVSVQPADHILAILRQLNAVVIHADSSLEVRGPTGYDGFDVDLRAVGELTPSVAALAALASPGSVSRLSGIAHLRGHETDRLAALSTEINRLGGTCRETPDGLVITATPLRPGIWRAYADHRMAMAGAIIGLRVAGVEVDDIAATTKTLPEFPRLWAEMVGPGQGWGYPQPRSGQRARRATGQGSGG.

Positions 23, 24, and 28 each coordinate 3-phosphoshikimate. Lys-23 provides a ligand contact to phosphoenolpyruvate. Residues Gly-96 and Arg-124 each coordinate phosphoenolpyruvate. Ser-167, Ser-168, Gln-169, Ser-196, Glu-311, and His-340 together coordinate 3-phosphoshikimate. Position 169 (Gln-169) interacts with phosphoenolpyruvate. The Proton acceptor role is filled by Glu-311. Phosphoenolpyruvate is bound by residues Arg-344, Arg-385, and Lys-410. Residues 426 to 450 are disordered; sequence GQGWGYPQPRSGQRARRATGQGSGG.

The protein belongs to the EPSP synthase family. In terms of assembly, monomer.

The protein localises to the cytoplasm. It catalyses the reaction 3-phosphoshikimate + phosphoenolpyruvate = 5-O-(1-carboxyvinyl)-3-phosphoshikimate + phosphate. Its pathway is metabolic intermediate biosynthesis; chorismate biosynthesis; chorismate from D-erythrose 4-phosphate and phosphoenolpyruvate: step 6/7. Its function is as follows. Catalyzes the transfer of the enolpyruvyl moiety of phosphoenolpyruvate (PEP) to the 5-hydroxyl of shikimate-3-phosphate (S3P) to produce enolpyruvyl shikimate-3-phosphate and inorganic phosphate. The chain is 3-phosphoshikimate 1-carboxyvinyltransferase from Mycobacterium tuberculosis (strain ATCC 25177 / H37Ra).